A 265-amino-acid chain; its full sequence is Palmitoyltransferase ZDHHC21 (265 aa).

Residues 1–16 are Cytoplasmic-facing; that stretch reads MGLRIHFVVDPHGWCC. Residues 17–37 traverse the membrane as a helical segment; it reads MGLIVFVWLYNIVIIPKIVLF. The Extracellular segment spans residues 38 to 44; it reads PHYEEGH. Residues 45 to 65 traverse the membrane as a helical segment; that stretch reads IPGILIIIFYGISIFCLVALV. Over 66–133 the chain is Cytoplasmic; the sequence is RASLTDPGRL…NNCVGEDNHW (68 aa). A DHHC domain is found at 90–140; the sequence is ELCNKCNLMRPKRSHHCSRCGHCVRRMDHHCPWINNCVGEDNHWLFLQLCF. C120 (S-palmitoyl cysteine intermediate) is an active-site residue. Residues 134-154 traverse the membrane as a helical segment; sequence LFLQLCFYTELLTCYALMFSF. Residues 155–185 lie on the Extracellular side of the membrane; the sequence is CHYYYFLPLKKRNLDLFVVRHELAIMRLAAF. A helical membrane pass occupies residues 186–206; the sequence is MGITMLVGITGLFYTQLIGII. Residues 207 to 265 are Cytoplasmic-facing; it reads TDTTSIEKMSNCCEEISRPRKPWQQTFSEVFGTRWKILWFIPFRQRQPLRVPYHFANHV.

It belongs to the DHHC palmitoyltransferase family. Widely expressed. Expressed in Henle's layer within the hair bulb and the hair shaft cuticle (at protein level). Expression is limited to the post-mitotic lineages of inner root sheath (IRS) and cuticle.

Its subcellular location is the golgi apparatus membrane. The protein localises to the golgi apparatus. It localises to the cis-Golgi network membrane. It is found in the cell membrane. It carries out the reaction L-cysteinyl-[protein] + hexadecanoyl-CoA = S-hexadecanoyl-L-cysteinyl-[protein] + CoA. Palmitoyltransferase that catalyzes the addition of palmitate onto various protein substrates. Palmitoylates sex steroid hormone receptors, including ESR1, PGR and AR, thereby regulating their targeting to the plasma membrane. This affects rapid intracellular signaling by sex hormones via ERK and AKT kinases and the generation of cAMP, but does not affect that mediated by their nuclear receptor. Palmitoylates FYN, regulates its localization in hair follicles and plays a key role in epidermal homeostasis and hair follicle differentiation. Through the palmitoylation of PLCB1 and the regulation of PLCB1 downstream signaling may indirectly regulate the function of the endothelial barrier and the adhesion of leukocytes to the endothelium. Also has a palmitoyltransferase activity toward ADRA1D, positively regulating its activity and expression and may thereby play a role in vascular contraction. May also palmitoylate eNOS and LCK. This Mus musculus (Mouse) protein is Palmitoyltransferase ZDHHC21.